A 377-amino-acid chain; its full sequence is 3-dehydroquinate synthase (377 aa).

NAD(+) contacts are provided by residues 113–117, 137–138, Lys-150, and Lys-159; these read GVIGD and TT. Residues Glu-192, His-254, and His-273 each coordinate Zn(2+).

Belongs to the sugar phosphate cyclases superfamily. Dehydroquinate synthase family. Requires Co(2+) as cofactor. It depends on Zn(2+) as a cofactor. NAD(+) serves as cofactor.

The protein localises to the cytoplasm. It catalyses the reaction 7-phospho-2-dehydro-3-deoxy-D-arabino-heptonate = 3-dehydroquinate + phosphate. The protein operates within metabolic intermediate biosynthesis; chorismate biosynthesis; chorismate from D-erythrose 4-phosphate and phosphoenolpyruvate: step 2/7. Its function is as follows. Catalyzes the conversion of 3-deoxy-D-arabino-heptulosonate 7-phosphate (DAHP) to dehydroquinate (DHQ). This is 3-dehydroquinate synthase from Bartonella tribocorum (strain CIP 105476 / IBS 506).